The sequence spans 455 residues: Ammonium transporter Rh type B (455 aa).

At 1-10 the chain is on the cytoplasmic side; it reads MARVPRHRRL. The chain crosses the membrane as a helical span at residues 11–31; that stretch reads VLPLLCLLFQGATALLFAIFV. The Extracellular segment spans residues 32-58; sequence RYNHETDAALWHWGNHSNVDNEFYFRY. Asn-46 is a glycosylation site (N-linked (GlcNAc...) asparagine). Residues 59–79 traverse the membrane as a helical segment; the sequence is PSFQDVHVMVFVGFGFLMVFL. Over 80–83 the chain is Cytoplasmic; it reads QRYG. The helical transmembrane segment at 84–104 threads the bilayer; the sequence is FSSVGFTFLVASLTLQWATLL. The Extracellular portion of the chain corresponds to 105-121; that stretch reads QGFLHSFHGGHIHVGVE. A helical transmembrane segment spans residues 122–142; that stretch reads SLINADFCAGAVLISFGAVLG. Topologically, residues 143–146 are cytoplasmic; sequence KTGP. The chain crosses the membrane as a helical span at residues 147-167; sequence AQLLLMALLEAVLFSVNEFIL. The Extracellular portion of the chain corresponds to 168-175; that stretch reads LSLLGVRD. Residues 176–198 form a helical membrane-spanning segment; sequence AGGSMTIHTFGAYFGLFLSWVLY. At 199–216 the chain is on the cytoplasmic side; the sequence is RSQLEKSRHRQSSVYNSD. The helical transmembrane segment at 217–237 threads the bilayer; that stretch reads LFAMIGTIFLWVFWPSFNSAP. Over 238–248 the chain is Extracellular; the sequence is TALGDGQHRTV. Residues 249-269 traverse the membrane as a helical segment; that stretch reads VNTYYSLTASTLSTFALSALV. Residues 270–279 lie on the Cytoplasmic side of the membrane; it reads SGDGRLDMVH. A helical membrane pass occupies residues 280-300; the sequence is VQNAALAGGVVVGTSSEMMLT. Position 301 (Pro-301) is a topological domain, extracellular. A helical transmembrane segment spans residues 302–322; it reads FGALAAGFLAGTVSTLGYKFF. Over 323-343 the chain is Cytoplasmic; the sequence is TPILESRFKLQDTCGVHNLHG. A helical transmembrane segment spans residues 344–364; the sequence is MPGVLGAILGVVVAALATHEA. Residues 365–390 are Extracellular-facing; that stretch reads YGDGLQSVFPLIAKGQRSATSQAVYQ. A helical membrane pass occupies residues 391–411; the sequence is LFGMFVTLVFASVGGSLGGLL. Topologically, residues 412–455 are cytoplasmic; it reads LRLPFLDSPPDSQCFEDQVYWEVPGEQETETQRPLRGGESDTRA. Residues 413–421 are interaction with ANK3; it reads RLPFLDSPP. Residues 434-455 are disordered; it reads VPGEQETETQRPLRGGESDTRA. The span at 441 to 455 shows a compositional bias: basic and acidic residues; sequence ETQRPLRGGESDTRA.

The protein belongs to the ammonium transporter (TC 2.A.49) family. Rh subfamily. Interacts (via C-terminus) with ANK2 and ANK3; required for targeting to the basolateral membrane. In terms of processing, N-glycosylated. In terms of tissue distribution, expressed in kidney by connecting segments and collecting tubules. Also expressed in liver by perivenous hepatocytes. Expressed in the forestomach and the fundus of the stomach. Expressed in duodenum, jejunum, ileum and colon at the level of villous (at protein level). Specifically expressed in kidney where it is restricted to the epithelial linings of the convoluted tubules and the loop of Henle. Also detected in ovary. Expressed by hepatocytes and dermal hair follicles and papillae.

The protein localises to the cell membrane. It is found in the basolateral cell membrane. The catalysed reaction is NH4(+)(in) = NH4(+)(out). The enzyme catalyses methylamine(out) = methylamine(in). It carries out the reaction CO2(out) = CO2(in). With respect to regulation, inhibited by amiloride. Ammonium transporter involved in the maintenance of acid-base homeostasis. Transports ammonium and its related derivative methylammonium across the basolateral plasma membrane of epithelial cells likely contributing to renal transepithelial ammonia transport and ammonia metabolism. May transport either NH4(+) or NH3 ammonia species predominantly mediating an electrogenic NH4(+) transport. May act as a CO2 channel providing for renal acid secretion. This Mus musculus (Mouse) protein is Ammonium transporter Rh type B (Rhbg).